Consider the following 461-residue polypeptide: Ribitol-5-phosphate transferase FKTN (461 aa).

Residues 1-7 (MSRINKN) are Cytoplasmic-facing. Residues 6-27 (KNVVLALLTLTSSAFLLFQLYY) form a required and sufficient for interaction with POMGNT1 region. The helical; Signal-anchor for type II membrane protein transmembrane segment at 8–28 (VVLALLTLTSSAFLLFQLYYY) threads the bilayer. The Lumenal portion of the chain corresponds to 29 to 461 (KHYLSTKNGA…SEWDEVIQLY (433 aa)). A glycan (N-linked (GlcNAc...) asparagine) is linked at Asn92.

The protein belongs to the LicD transferase family. In terms of assembly, forms a complex composed of FKTN/fukutin, FKRP and RXYLT1/TMEM5. Interacts (via transmembrane domain) with POMGNT1; the interaction is direct and is required for normal POMGNT1 location in Golgi membranes. Expressed in the retina (at protein level). Widely expressed with highest expression in brain, heart, pancreas and skeletal muscle. Expressed at similar levels in control fetal and adult brain. Expressed in migrating neurons, including Cajar-Retzius cells and adult cortical neurons, as well as hippocampal pyramidal cells and cerebellar Purkinje cells. No expression observed in the glia limitans, the subpial astrocytes (which contribute to basement membrane formation) or other glial cells.

The protein localises to the golgi apparatus membrane. The protein resides in the cytoplasm. It localises to the nucleus. It carries out the reaction 3-O-[beta-D-GalNAc-(1-&gt;3)-beta-D-GlcNAc-(1-&gt;4)-(O-6-P-alpha-D-Man)]-Thr-[protein] + CDP-L-ribitol = 3-O-[Rib-ol-P-3-beta-D-GalNAc-(1-&gt;3)-beta-D-GlcNAc-(1-&gt;4)-(O-6-P-alpha-D-Man)]-Thr-[protein] + CMP + H(+). It functions in the pathway protein modification; protein glycosylation. Functionally, catalyzes the transfer of a ribitol-phosphate from CDP-ribitol to the distal N-acetylgalactosamine of the phosphorylated O-mannosyl trisaccharide (N-acetylgalactosamine-beta-3-N-acetylglucosamine-beta-4-(phosphate-6-)mannose), a carbohydrate structure present in alpha-dystroglycan (DAG1). This constitutes the first step in the formation of the ribitol 5-phosphate tandem repeat which links the phosphorylated O-mannosyl trisaccharide to the ligand binding moiety composed of repeats of 3-xylosyl-alpha-1,3-glucuronic acid-beta-1. Required for normal location of POMGNT1 in Golgi membranes, and for normal POMGNT1 activity. May interact with and reinforce a large complex encompassing the outside and inside of muscle membranes. Could be involved in brain development. The sequence is that of Ribitol-5-phosphate transferase FKTN from Homo sapiens (Human).